The primary structure comprises 215 residues: FMN-dependent NADH:quinone oxidoreductase (215 aa).

An FMN-binding site is contributed by serine 17–serine 19.

It belongs to the azoreductase type 1 family. Homodimer. The cofactor is FMN.

It catalyses the reaction 2 a quinone + NADH + H(+) = 2 a 1,4-benzosemiquinone + NAD(+). The enzyme catalyses N,N-dimethyl-1,4-phenylenediamine + anthranilate + 2 NAD(+) = 2-(4-dimethylaminophenyl)diazenylbenzoate + 2 NADH + 2 H(+). Functionally, quinone reductase that provides resistance to thiol-specific stress caused by electrophilic quinones. Its function is as follows. Also exhibits azoreductase activity. Catalyzes the reductive cleavage of the azo bond in aromatic azo compounds to the corresponding amines. In Clostridium botulinum (strain Alaska E43 / Type E3), this protein is FMN-dependent NADH:quinone oxidoreductase.